The primary structure comprises 188 residues: 2-amino-4-hydroxy-6-hydroxymethyldihydropteridine pyrophosphokinase (188 aa).

The protein belongs to the HPPK family.

It catalyses the reaction 6-hydroxymethyl-7,8-dihydropterin + ATP = (7,8-dihydropterin-6-yl)methyl diphosphate + AMP + H(+). Its pathway is cofactor biosynthesis; tetrahydrofolate biosynthesis; 2-amino-4-hydroxy-6-hydroxymethyl-7,8-dihydropteridine diphosphate from 7,8-dihydroneopterin triphosphate: step 4/4. In terms of biological role, catalyzes the transfer of pyrophosphate from adenosine triphosphate (ATP) to 6-hydroxymethyl-7,8-dihydropterin, an enzymatic step in folate biosynthesis pathway. This Mycobacterium tuberculosis (strain ATCC 25618 / H37Rv) protein is 2-amino-4-hydroxy-6-hydroxymethyldihydropteridine pyrophosphokinase (folK).